The primary structure comprises 233 residues: Lysine exporter LysE (233 aa).

Over 1 to 2 (ME) the chain is Cytoplasmic. A helical membrane pass occupies residues 3 to 23 (IFITGLLLGASLLLSIGPQNV). Residues 24 to 65 (LVIKQGIKREGLIAVLLVCLISDVFLFIAGTLGVDLLSNAAP) are Periplasmic-facing. A helical transmembrane segment spans residues 66 to 86 (IVLDIMRWGGIAYLLWFAVMA). Topologically, residues 87–143 (AKDAMTNKVEAPQIIEETEPTVPDDTPLGGSAVATDTRNRVRVEVSVDKQRVWVKPM) are cytoplasmic. Residues 144-164 (LMAIVLTWLNPNAYLDAFVFI) traverse the membrane as a helical segment. The Periplasmic portion of the chain corresponds to 165–176 (GGVGAQYGDTGR). Residues 177–197 (WIFAAGAFAASLIWFPLVGFG) form a helical membrane-spanning segment. Over 198–212 (AAALSRPLSSPKVWR) the chain is Cytoplasmic. A helical membrane pass occupies residues 213-233 (WINVVVAVVMTALAIKLMLMG).

It belongs to the LysE/ArgO transporter (TC 2.A.75) family.

It is found in the cell inner membrane. Its activity is regulated as follows. Transport process is modulated by three forces: the membrane potential, the chemical potential of lysine, and the proton gradient. Strongly inhibited by CCCP and valinomycin. Its function is as follows. Catalyzes the efflux of L-lysine. Can also export L-arginine and L-citrulline. The lysEG system prevents bacteriostasis due to elevated L-lysine or L-arginine concentrations that arise during growth in the presence of peptides or in mutants possessing a deregulated biosynthesis pathway. In vitro, can also export D-lysine during biotechnological production of D-amino acids. This is Lysine exporter LysE from Corynebacterium glutamicum (strain ATCC 13032 / DSM 20300 / JCM 1318 / BCRC 11384 / CCUG 27702 / LMG 3730 / NBRC 12168 / NCIMB 10025 / NRRL B-2784 / 534).